The following is a 370-amino-acid chain: Anhydro-N-acetylmuramic acid kinase (370 aa).

12-19 (GTSLDGVD) contacts ATP.

It belongs to the anhydro-N-acetylmuramic acid kinase family.

It carries out the reaction 1,6-anhydro-N-acetyl-beta-muramate + ATP + H2O = N-acetyl-D-muramate 6-phosphate + ADP + H(+). Its pathway is amino-sugar metabolism; 1,6-anhydro-N-acetylmuramate degradation. It functions in the pathway cell wall biogenesis; peptidoglycan recycling. In terms of biological role, catalyzes the specific phosphorylation of 1,6-anhydro-N-acetylmuramic acid (anhMurNAc) with the simultaneous cleavage of the 1,6-anhydro ring, generating MurNAc-6-P. Is required for the utilization of anhMurNAc either imported from the medium or derived from its own cell wall murein, and thus plays a role in cell wall recycling. The polypeptide is Anhydro-N-acetylmuramic acid kinase (Proteus mirabilis (strain HI4320)).